The primary structure comprises 220 residues: Probable septum site-determining protein MinC (220 aa).

The protein belongs to the MinC family. Interacts with MinD and FtsZ.

In terms of biological role, cell division inhibitor that blocks the formation of polar Z ring septums. Rapidly oscillates between the poles of the cell to destabilize FtsZ filaments that have formed before they mature into polar Z rings. Prevents FtsZ polymerization. The sequence is that of Probable septum site-determining protein MinC from Vibrio campbellii (strain ATCC BAA-1116).